The primary structure comprises 695 residues: MAGILSKTLSEVHPSLRTNGMGIGNTHRRISLGFLPPNKKNPLVRKFRARTRNIDQRSFRSLTDDFGSNVHEPNPYLGNIDEEPDLYYHDEEDGELSRTISLPSRVSETPELSPQDVDWILHEHERRYSSVCNSDNEEASQSNTPDRIQEYSGRELEYDEFMNRLQAQKQKLTRSAVTDAKGTSHHRRPSFVSVTSRGSVPTIYQEIDENDSEALAELAHSHVTFKSEARVLASYSFPLIFTFLLEQIFPMVCSLTVGHLGKNELAAVSLASMTSNITLAIFEGIATSLDTLCPQAYGSGRFYSVGVHLQRCIAFSLVIYIPFAVMWWYSEPLLSYIIPEKELINLTSRFLRVLILGAPAYIFFENLKRFLQAQGIFDAGIYVLTICAPLNVLVSYTLVWNKYIGVGFIGAAIAVVLNFWLMFFLLLFYALYIDGRKCWGGFSRKAFTHWNDLGHLAFSGIIMLEAEELSYELLTLFSAYYGVSYLAAQSAVSTMAALLYMIPFAIGISTSTRIANFIGAKRTDFAHISSQVGLSFSFIAGFINCCILVFGRNLIANIYSKDPEVIKLIAQVLPLVGIVQNFDSLNAVAGSCLRGQGMQSLGSIVNLMAYYLFGIPLALILSWFFDMKLYGLWIGIGSAMLLIGLVEAYYVLFPDWDKIMTYAEILKETEDDEVDSDEYLTDSDDPDENTALLGA.

At Ser113 the chain carries Phosphoserine. Transmembrane regions (helical) follow at residues 237–257, 265–285, 313–333, 344–364, 380–400, 408–428, 457–477, 488–508, 531–551, 565–585, 604–624, and 633–653; these read FPLIFTFLLEQIFPMVCSLTV, LAAVSLASMTSNITLAIFEGI, IAFSLVIYIPFAVMWWYSEPL, INLTSRFLRVLILGAPAYIFF, GIYVLTICAPLNVLVSYTLVW, FIGAAIAVVLNFWLMFFLLLF, AFSGIIMLEAEELSYELLTLF, AQSAVSTMAALLYMIPFAIGI, QVGLSFSFIAGFINCCILVFG, VIKLIAQVLPLVGIVQNFDSL, IVNLMAYYLFGIPLALILSWF, and WIGIGSAMLLIGLVEAYYVLF. Residues 673 to 688 are compositionally biased toward acidic residues; that stretch reads EVDSDEYLTDSDDPDE. Residues 673–695 are disordered; that stretch reads EVDSDEYLTDSDDPDENTALLGA.

It belongs to the multi antimicrobial extrusion (MATE) (TC 2.A.66.1) family.

The protein localises to the membrane. This is an uncharacterized protein from Saccharomyces cerevisiae (strain ATCC 204508 / S288c) (Baker's yeast).